A 32-amino-acid chain; its full sequence is Cytochrome b6-f complex subunit 7 (32 aa).

The chain crosses the membrane as a helical span at residues 5–25; that stretch reads IFGTAAIFWVLIPAGLLGGAL.

The protein belongs to the PetM family. In terms of assembly, the 4 large subunits of the cytochrome b6-f complex are cytochrome b6, subunit IV (17 kDa polypeptide, PetD), cytochrome f and the Rieske protein, while the 4 small subunits are PetG, PetL, PetM and PetN. The complex functions as a dimer.

Its subcellular location is the cellular thylakoid membrane. In terms of biological role, component of the cytochrome b6-f complex, which mediates electron transfer between photosystem II (PSII) and photosystem I (PSI), cyclic electron flow around PSI, and state transitions. This is Cytochrome b6-f complex subunit 7 from Prochlorococcus marinus (strain SARG / CCMP1375 / SS120).